We begin with the raw amino-acid sequence, 345 residues long: Phosphoribosylformylglycinamidine cyclo-ligase (345 aa).

Belongs to the AIR synthase family.

It localises to the cytoplasm. It catalyses the reaction 2-formamido-N(1)-(5-O-phospho-beta-D-ribosyl)acetamidine + ATP = 5-amino-1-(5-phospho-beta-D-ribosyl)imidazole + ADP + phosphate + H(+). Its pathway is purine metabolism; IMP biosynthesis via de novo pathway; 5-amino-1-(5-phospho-D-ribosyl)imidazole from N(2)-formyl-N(1)-(5-phospho-D-ribosyl)glycinamide: step 2/2. This is Phosphoribosylformylglycinamidine cyclo-ligase from Shouchella clausii (strain KSM-K16) (Alkalihalobacillus clausii).